We begin with the raw amino-acid sequence, 45 residues long: uncharacterized protein (45 aa).

This is an uncharacterized protein from Escherichia coli (Bacteriophage T4).